Here is a 465-residue protein sequence, read N- to C-terminus: GTPase Der (465 aa).

2 consecutive EngA-type G domains span residues 3-167 (PLVA…PERS) and 179-352 (IHIA…VSAL). Residues 9-16 (GRPNVGKS), 57-61 (DTGGM), 119-122 (NKID), 185-192 (GRPNVGKS), 232-236 (DTAGL), and 297-300 (NKWD) contribute to the GTP site. One can recognise a KH-like domain in the interval 353–437 (RQFSTSEVNK…PVRFLFREGD (85 aa)).

Belongs to the TRAFAC class TrmE-Era-EngA-EngB-Septin-like GTPase superfamily. EngA (Der) GTPase family. Associates with the 50S ribosomal subunit.

In terms of biological role, GTPase that plays an essential role in the late steps of ribosome biogenesis. The polypeptide is GTPase Der (Xylella fastidiosa (strain M12)).